Here is a 554-residue protein sequence, read N- to C-terminus: Formate--tetrahydrofolate ligase (554 aa).

An ATP-binding site is contributed by 64–71 (TPYGEGKT).

This sequence belongs to the formate--tetrahydrofolate ligase family.

The enzyme catalyses (6S)-5,6,7,8-tetrahydrofolate + formate + ATP = (6R)-10-formyltetrahydrofolate + ADP + phosphate. It participates in one-carbon metabolism; tetrahydrofolate interconversion. The protein is Formate--tetrahydrofolate ligase of Caldicellulosiruptor saccharolyticus (strain ATCC 43494 / DSM 8903 / Tp8T 6331).